The following is a 301-amino-acid chain: tRNA dimethylallyltransferase (301 aa).

Residue 5-12 (GPTASGKS) participates in ATP binding. Substrate is bound at residue 7-12 (TASGKS). The segment at 30–33 (DSMQ) is interaction with substrate tRNA.

The protein belongs to the IPP transferase family. Monomer. Mg(2+) is required as a cofactor.

It catalyses the reaction adenosine(37) in tRNA + dimethylallyl diphosphate = N(6)-dimethylallyladenosine(37) in tRNA + diphosphate. In terms of biological role, catalyzes the transfer of a dimethylallyl group onto the adenine at position 37 in tRNAs that read codons beginning with uridine, leading to the formation of N6-(dimethylallyl)adenosine (i(6)A). The sequence is that of tRNA dimethylallyltransferase from Rhodopseudomonas palustris (strain TIE-1).